A 259-amino-acid polypeptide reads, in one-letter code: 3-deoxy-manno-octulosonate cytidylyltransferase (259 aa).

The protein belongs to the KdsB family.

It localises to the cytoplasm. It catalyses the reaction 3-deoxy-alpha-D-manno-oct-2-ulosonate + CTP = CMP-3-deoxy-beta-D-manno-octulosonate + diphosphate. Its pathway is nucleotide-sugar biosynthesis; CMP-3-deoxy-D-manno-octulosonate biosynthesis; CMP-3-deoxy-D-manno-octulosonate from 3-deoxy-D-manno-octulosonate and CTP: step 1/1. The protein operates within bacterial outer membrane biogenesis; lipopolysaccharide biosynthesis. Activates KDO (a required 8-carbon sugar) for incorporation into bacterial lipopolysaccharide in Gram-negative bacteria. In Xanthomonas euvesicatoria pv. vesicatoria (strain 85-10) (Xanthomonas campestris pv. vesicatoria), this protein is 3-deoxy-manno-octulosonate cytidylyltransferase.